The following is a 425-amino-acid chain: Dihydroorotase (425 aa).

H56 and H58 together coordinate Zn(2+). Substrate-binding positions include 58–60 (HYR) and N90. Zn(2+) contacts are provided by D148, H175, and H228. Position 274 (N274) interacts with substrate. D301 provides a ligand contact to Zn(2+). Residue D301 is part of the active site. Substrate-binding positions include H305 and 319-320 (FG).

It belongs to the metallo-dependent hydrolases superfamily. DHOase family. Class I DHOase subfamily. It depends on Zn(2+) as a cofactor.

The enzyme catalyses (S)-dihydroorotate + H2O = N-carbamoyl-L-aspartate + H(+). It participates in pyrimidine metabolism; UMP biosynthesis via de novo pathway; (S)-dihydroorotate from bicarbonate: step 3/3. In terms of biological role, catalyzes the reversible cyclization of carbamoyl aspartate to dihydroorotate. This Lactobacillus johnsonii (strain CNCM I-12250 / La1 / NCC 533) protein is Dihydroorotase.